The sequence spans 107 residues: Ig kappa chain V region 4135 (107 aa).

The segment at 1–24 (ADIVMTQTPASVSEPVGGTVTIKC) is framework-1. The segment at 25 to 35 (QTSQSIDDYLS) is complementarity-determining-1. Residues 36-50 (WYQQKPGQPPKGLIY) are framework-2. The tract at residues 51–57 (RASTLAS) is complementarity-determining-2. Residues 58–89 (GVPSRFRGSGSGTDFTLTISDLECADAATYYC) are framework-3. The tract at residues 90–96 (QSTYGVG) is complementarity-determining-3. Positions 97–106 (FGGGTEVVVK) are framework-4.

This is Ig kappa chain V region 4135 from Oryctolagus cuniculus (Rabbit).